We begin with the raw amino-acid sequence, 475 residues long: Methyltransferase-like protein 25B (475 aa).

Residues 186-210 (QRLVERAQRLDQELLQTLEKEEKRN) are a coiled coil. Residues 406–426 (VVAFFSLALLLAPLVETLILL) traverse the membrane as a helical segment.

Belongs to the METTL25 family.

It is found in the membrane. This is Methyltransferase-like protein 25B from Bos taurus (Bovine).